The primary structure comprises 556 residues: METTLRGVGVSHGVAIGEVRHMGTAVLEPPAKQIPAEDAEREQGRARKAVEAVAADLMARGNLAGGEAQAVLEAQAMMAQDPELLADVERRITVGSTAERAVYDAFAAYRALLAGAGEYLAGRVADLDDVRNRIVARLLGVPMPGVPDSDEPYVLIARDLAPADTALLDPTLVLGFVTEEGGPTSHSAILARALGVPAVVALPGAGEIPEGTVVAVDGSTGEIFVNPAEEKKARLAAEAAERKAALAAATGPGATSDGHKVPLLANIGGPADVPAAVEAGAEGVGLFRTEFLFLDDSANAPSEEKQITAYRQVLEAFPEGRVVVRVLDAGADKPLDFLTPGDEPNPALGVRGLRTLLDHPDVLRTQLTALAKAAEGLPVYLEVMAPMVADRADAKAFADACREAGLRAKFGAMVEIPSAALRARSVLQEVEFLSLGTNDLAQYTFAADRQVGAVSRLQDPWQPALLDLVALSAEAAKAEGKSCGVCGEAAADPLLACVLTGLGVTSLSMGAASLPYVRATLAKFTLAQCERAAAAARAADSAEEARTAAQAVLSGE.

His-186 serves as the catalytic Tele-phosphohistidine intermediate. Arg-288 and Arg-325 together coordinate phosphoenolpyruvate. The Mg(2+) site is built by Glu-415 and Asp-439. Residues 438 to 439 (ND) and Arg-449 each bind phosphoenolpyruvate. The Proton donor role is filled by Cys-486.

This sequence belongs to the PEP-utilizing enzyme family. Homodimer. Mg(2+) is required as a cofactor.

Its subcellular location is the cytoplasm. The catalysed reaction is L-histidyl-[protein] + phosphoenolpyruvate = N(pros)-phospho-L-histidyl-[protein] + pyruvate. Its function is as follows. General (non sugar-specific) component of the phosphoenolpyruvate-dependent sugar phosphotransferase system (sugar PTS). This major carbohydrate active-transport system catalyzes the phosphorylation of incoming sugar substrates concomitantly with their translocation across the cell membrane. Enzyme I transfers the phosphoryl group from phosphoenolpyruvate (PEP) to the phosphoryl carrier protein (HPr). The protein is Phosphoenolpyruvate-protein phosphotransferase (ptsI) of Streptomyces coelicolor (strain ATCC BAA-471 / A3(2) / M145).